A 551-amino-acid polypeptide reads, in one-letter code: Cleavage and polyadenylation specificity factor subunit 6 (551 aa).

The segment at 1–213 (MADGVDHIDI…RGRFPGAVPG (213 aa)) is necessary for interaction with NXF1. The RRM domain maps to 81-161 (IALYIGNLTW…QSPVVTPCNK (81 aa)). The necessary for interaction with NUDT21/CPSF5 stretch occupies residues 81–161 (IALYIGNLTW…QSPVVTPCNK (81 aa)). Positions 81-161 (IALYIGNLTW…QSPVVTPCNK (81 aa)) are necessary for nuclear paraspeckles localization. T157 is modified (phosphothreonine). Polar residues predominate over residues 169 to 180 (MQSRKTTQSGQM). Disordered regions lie at residues 169–411 (MQSR…PLSE) and 477–551 (LHGI…YRHR). Gly residues predominate over residues 184–193 (GKAGPPGGGS). Positions 202-206 (RGRGR) match the GAR motif. Residues 207-219 (FPGAVPGGDRFPG) show a composition bias toward low complexity. Composition is skewed to pro residues over residues 220-265 (PAGP…PLAG), 285-366 (GQPP…PPPT), and 377-388 (GPPPTDPYGRPP). Residues 389–404 (PYDRGDYGPPGREMDT) show a composition bias toward basic and acidic residues. A phosphothreonine mark is found at T404 and T407. Positions 404–551 (TARTPLSEAE…RDREREYRHR (148 aa)) are sufficient for nuclear speckle localization. Residues 405–551 (ARTPLSEAEF…RDREREYRHR (147 aa)) are necessary for RNA-binding. A necessary for interaction with SRSF3, SRSF7 and TRA2B/SFRS10 region spans residues 481-551 (ESKSYGSGSR…RDREREYRHR (71 aa)). Positions 489-503 (SRRERSRERDHSRSR) are enriched in basic and acidic residues. Residues 490 to 551 (RRERSRERDH…RDREREYRHR (62 aa)) form an arg/Ser-rich domain region. S494, S500, S511, S513, and S525 each carry phosphoserine. Over residues 504 to 514 (EKSRRHKSRSR) the composition is skewed to basic residues. The interval 510-551 (KSRSRDRHDDYYRERSRERERHRDRDRDRDRERDREREYRHR) is sufficient for nuclear targeting. Residues 515 to 551 (DRHDDYYRERSRERERHRDRDRDRDRERDREREYRHR) show a composition bias toward basic and acidic residues.

Belongs to the RRM CPSF6/7 family. Component of the cleavage factor Im (CFIm) complex which is a heterotetramer composed of two subunits of NUDT21/CPSF5 and two subunits of CPSF6 or CPSF7 or a heterodimer of CPSF6 and CPSF7. The cleavage factor Im (CFIm) complex associates with the CPSF and CSTF complexes to promote the assembly of the core mRNA 3'-processing machinery. Associates with the exon junction complex (EJC). Associates with the 80S ribosome particle. Interacts (via the RRM domain) with NUDT21/CPSF5; this interaction is direct and enhances binding to RNA. Interacts (via Arg/Ser-rich domain) with FIP1L1 (preferentially via unphosphorylated form and Arg/Glu/Asp-rich domain); this interaction mediates, at least in part, the interaction between the CFIm and CPSF complexes and may be inhibited by CPSF6 hyper-phosphorylation. Interacts (via N-terminus) with NXF1; this interaction is direct. Interacts with SRSF3. Interacts with SRSF7. Interacts with SNRNP70. Interacts with TRA2B/SFRS10. Interacts with UPF1. Interacts with UPF3B. Interacts with VIRMA. Interacts (via Arg/Ser-rich domain) with TNPO3; promoting nuclear import of CPSF6 independently of its phosphorylation status. Interacts with YTHDC1. Post-translationally, phosphorylated. Phosphorylated in the Arg/Ser-rich domain by SRPK1, in vitro. In terms of processing, symmetrically dimethylated on arginine residues by PRMT5 in a WDR77- and CLNS1A-dependent manner. Asymmetrically dimethylated on arginine residues by PRMT1. Symmetrically dimethylated on arginine residues in the GAR motif by PRMT5 in a WDR77- and CLNS1A-dependent manner. Asymmetrically dimethylated on arginine residues in the GAR motif by PRMT1. As to expression, expressed in testis. Expressed in male germ cells (at protein level).

The protein localises to the nucleus. Its subcellular location is the nucleoplasm. It is found in the nucleus speckle. It localises to the cytoplasm. Its function is as follows. Component of the cleavage factor Im (CFIm) complex that functions as an activator of the pre-mRNA 3'-end cleavage and polyadenylation processing required for the maturation of pre-mRNA into functional mRNAs. CFIm contributes to the recruitment of multiprotein complexes on specific sequences on the pre-mRNA 3'-end, so called cleavage and polyadenylation signals (pA signals). Most pre-mRNAs contain multiple pA signals, resulting in alternative cleavage and polyadenylation (APA) producing mRNAs with variable 3'-end formation. The CFIm complex acts as a key regulator of cleavage and polyadenylation site choice during APA through its binding to 5'-UGUA-3' elements localized in the 3'-untranslated region (UTR) for a huge number of pre-mRNAs. CPSF6 enhances NUDT21/CPSF5 binding to 5'-UGUA-3' elements localized upstream of pA signals and promotes RNA looping, and hence activates directly the mRNA 3'-processing machinery. Plays a role in mRNA export. This is Cleavage and polyadenylation specificity factor subunit 6 from Mus musculus (Mouse).